Reading from the N-terminus, the 192-residue chain is NADH dehydrogenase [ubiquinone] iron-sulfur protein 3 (192 aa).

The protein belongs to the complex I 30 kDa subunit family. Complex I is composed of about 45 different subunits. This is a component of the iron-sulfur (IP) fragment of the enzyme.

It is found in the mitochondrion inner membrane. The catalysed reaction is a ubiquinone + NADH + 5 H(+)(in) = a ubiquinol + NAD(+) + 4 H(+)(out). Core subunit of the mitochondrial membrane respiratory chain NADH dehydrogenase (Complex I) that is believed to belong to the minimal assembly required for catalysis. Complex I functions in the transfer of electrons from NADH to the respiratory chain. The immediate electron acceptor for the enzyme is believed to be ubiquinone. The polypeptide is NADH dehydrogenase [ubiquinone] iron-sulfur protein 3 (NAD9) (Patellifolia webbiana (Patellaria webbiana)).